The sequence spans 449 residues: UDP-N-acetylmuramoylalanine--D-glutamate ligase (449 aa).

Residue 118–124 (GTNGKTT) participates in ATP binding.

This sequence belongs to the MurCDEF family.

It localises to the cytoplasm. It carries out the reaction UDP-N-acetyl-alpha-D-muramoyl-L-alanine + D-glutamate + ATP = UDP-N-acetyl-alpha-D-muramoyl-L-alanyl-D-glutamate + ADP + phosphate + H(+). Its pathway is cell wall biogenesis; peptidoglycan biosynthesis. In terms of biological role, cell wall formation. Catalyzes the addition of glutamate to the nucleotide precursor UDP-N-acetylmuramoyl-L-alanine (UMA). This Staphylococcus aureus (strain Mu3 / ATCC 700698) protein is UDP-N-acetylmuramoylalanine--D-glutamate ligase.